A 301-amino-acid polypeptide reads, in one-letter code: Protoheme IX farnesyltransferase 1 (301 aa).

A run of 9 helical transmembrane segments spans residues 29 to 49, 51 to 71, 101 to 121, 123 to 143, 150 to 170, 177 to 197, 223 to 243, 244 to 264, and 281 to 301; these read VVALMLLTVLVGMCLAVPTAV, VQPLIAGMFGIALMAGSAAAL, ALIFAASIGGLGFVVLYVLVN, LTAWLTFASLIGYALVYTAYL, NIVIGGLAGAMPPLLGWTAVT, ALLLVIIIFTWTPPHFWALAI, CILLYTVLLAIACLLPVLVGM, CGPMYFVCSSLLSSVFIYKAW, and FSIYHLMLLFMALLIDHYLWS.

The protein belongs to the UbiA prenyltransferase family. Protoheme IX farnesyltransferase subfamily.

Its subcellular location is the cell inner membrane. It catalyses the reaction heme b + (2E,6E)-farnesyl diphosphate + H2O = Fe(II)-heme o + diphosphate. The protein operates within porphyrin-containing compound metabolism; heme O biosynthesis; heme O from protoheme: step 1/1. Its function is as follows. Converts heme B (protoheme IX) to heme O by substitution of the vinyl group on carbon 2 of heme B porphyrin ring with a hydroxyethyl farnesyl side group. This is Protoheme IX farnesyltransferase 1 from Shewanella putrefaciens (strain CN-32 / ATCC BAA-453).